Consider the following 436-residue polypeptide: Acetyl-CoA decarbonylase/synthase complex subunit delta 1 (436 aa).

The protein belongs to the CdhD family. As to quaternary structure, heterodimer of delta and gamma chains. The ACDS complex is made up of alpha, epsilon, beta, gamma and delta chains with a probable stoichiometry of (alpha(2)epsilon(2))(4)-beta(8)-(gamma(1)delta(1))(8) (Potential).

Its pathway is one-carbon metabolism; methanogenesis from acetate. Its function is as follows. Part of a complex that catalyzes the reversible cleavage of acetyl-CoA, allowing growth on acetate as sole source of carbon and energy. Probably maintains the overall quaternary structure of the ACDS complex. This chain is Acetyl-CoA decarbonylase/synthase complex subunit delta 1 (cdhD1), found in Methanosarcina thermophila.